Here is a 277-residue protein sequence, read N- to C-terminus: Diaminopimelate epimerase (277 aa).

Substrate contacts are provided by Asn15, Gln48, and Asn66. Residue Cys75 is the Proton donor of the active site. Residues Gly76–Asn77, Asn156, Asn189, and Glu207–Arg208 each bind substrate. Cys216 acts as the Proton acceptor in catalysis. Position 217-218 (Gly217–Ser218) interacts with substrate.

Belongs to the diaminopimelate epimerase family. Homodimer.

The protein resides in the cytoplasm. The enzyme catalyses (2S,6S)-2,6-diaminopimelate = meso-2,6-diaminopimelate. Its pathway is amino-acid biosynthesis; L-lysine biosynthesis via DAP pathway; DL-2,6-diaminopimelate from LL-2,6-diaminopimelate: step 1/1. Catalyzes the stereoinversion of LL-2,6-diaminopimelate (L,L-DAP) to meso-diaminopimelate (meso-DAP), a precursor of L-lysine and an essential component of the bacterial peptidoglycan. This is Diaminopimelate epimerase from Acidiphilium cryptum (strain JF-5).